The primary structure comprises 182 residues: Organic solute transporter subunit beta (182 aa).

Positions 1 to 20 (MSGLLKYLFGCFILCLLLQG) are cleaved as a signal peptide. The Extracellular segment spans residues 21-64 (KTHMTSATISKPHETIDIEKQNMTGERNSTLAQQLSFPMEDPTN). N-linked (GlcNAc...) asparagine glycosylation is found at Asn-42 and Asn-48. Residues 65–85 (WNYAILALAFVVLFLAFLILA) traverse the membrane as a helical segment. The Cytoplasmic segment spans residues 86 to 182 (QNSRANRTRK…LYTDSKEDDV (97 aa)).

The protein belongs to the OST-beta family. In terms of assembly, interacts with slc51a. The Ost-alpha/Ost-beta complex is a heterodimer composed of alpha (slc51a) and beta (slc51b) subunit; may induce the transport of slc51a from the endoplasmic reticulum to the plasma membrane. As to expression, expressed in liver.

Its subcellular location is the cell membrane. In terms of biological role, essential component of the Ost-alpha/Ost-beta complex, a heterodimer that acts as the intestinal basolateral transporter responsible for bile acid export from enterocytes into portal blood. Efficiently transports the major species of bile acids. May modulate slc51a glycosylation, membrane trafficking and stability activities. Able to transport taurocholate, estrone sulfate, digoxin, and prostaglandin E(2), but not p-aminohippurate or S-dinitrophenyl glutathione. This chain is Organic solute transporter subunit beta (slc51b), found in Leucoraja erinaceus (Little skate).